We begin with the raw amino-acid sequence, 192 residues long: Probable thymidylate kinase (192 aa).

Position 7–14 (7–14 (GIDGAGKS)) interacts with ATP.

The protein belongs to the thymidylate kinase family.

It carries out the reaction dTMP + ATP = dTDP + ADP. In Methanobrevibacter smithii (strain ATCC 35061 / DSM 861 / OCM 144 / PS), this protein is Probable thymidylate kinase.